We begin with the raw amino-acid sequence, 438 residues long: 3-phosphoshikimate 1-carboxyvinyltransferase (438 aa).

Positions 28, 29, and 33 each coordinate 3-phosphoshikimate. Lys28 is a binding site for phosphoenolpyruvate. The phosphoenolpyruvate site is built by Gly97 and Arg125. Residues Ser168, Ser169, Gln170, Glu316, and His343 each coordinate 3-phosphoshikimate. Gln170 is a phosphoenolpyruvate binding site. The Proton acceptor role is filled by Glu316. 3 residues coordinate phosphoenolpyruvate: Arg347, Arg388, and Lys413.

The protein belongs to the EPSP synthase family. As to quaternary structure, monomer.

The protein resides in the cytoplasm. The catalysed reaction is 3-phosphoshikimate + phosphoenolpyruvate = 5-O-(1-carboxyvinyl)-3-phosphoshikimate + phosphate. It functions in the pathway metabolic intermediate biosynthesis; chorismate biosynthesis; chorismate from D-erythrose 4-phosphate and phosphoenolpyruvate: step 6/7. In terms of biological role, catalyzes the transfer of the enolpyruvyl moiety of phosphoenolpyruvate (PEP) to the 5-hydroxyl of shikimate-3-phosphate (S3P) to produce enolpyruvyl shikimate-3-phosphate and inorganic phosphate. This Rhodococcus jostii (strain RHA1) protein is 3-phosphoshikimate 1-carboxyvinyltransferase.